Here is a 399-residue protein sequence, read N- to C-terminus: Protochlorophyllide reductase, chloroplastic (399 aa).

Residues 1–64 (MALQTASMLP…RQKVGAVRAE (64 aa)) constitute a chloroplast transit peptide.

Belongs to the short-chain dehydrogenases/reductases (SDR) family. POR subfamily.

It localises to the plastid. The protein resides in the chloroplast. It catalyses the reaction chlorophyllide a + NADP(+) = protochlorophyllide a + NADPH + H(+). The protein operates within porphyrin-containing compound metabolism; chlorophyll biosynthesis. Functionally, phototransformation of protochlorophyllide (Pchlide) to chlorophyllide (Chlide). In Pisum sativum (Garden pea), this protein is Protochlorophyllide reductase, chloroplastic (3PCR).